The following is an 862-amino-acid chain: Aldehyde-alcohol dehydrogenase (862 aa).

Cys-244 is an active-site residue. 420–425 lines the NAD(+) pocket; that stretch reads GFWGGN.

The protein in the N-terminal section; belongs to the aldehyde dehydrogenase family. It in the C-terminal section; belongs to the iron-containing alcohol dehydrogenase family.

It catalyses the reaction a primary alcohol + NAD(+) = an aldehyde + NADH + H(+). The enzyme catalyses a secondary alcohol + NAD(+) = a ketone + NADH + H(+). It carries out the reaction an aldehyde + NAD(+) + H2O = a carboxylate + NADH + 2 H(+). Its function is as follows. Has both aldehyde and alcohol dehydrogenase activities. Can use acetaldehyde, butyraldehyde, butanol and ethanol. The protein is Aldehyde-alcohol dehydrogenase of Clostridium acetobutylicum (strain ATCC 824 / DSM 792 / JCM 1419 / IAM 19013 / LMG 5710 / NBRC 13948 / NRRL B-527 / VKM B-1787 / 2291 / W).